A 271-amino-acid polypeptide reads, in one-letter code: Ribosomal RNA small subunit methyltransferase A (271 aa).

Positions 11, 13, 38, 58, 86, and 101 each coordinate S-adenosyl-L-methionine.

Belongs to the class I-like SAM-binding methyltransferase superfamily. rRNA adenine N(6)-methyltransferase family. RsmA subfamily.

The protein localises to the cytoplasm. The catalysed reaction is adenosine(1518)/adenosine(1519) in 16S rRNA + 4 S-adenosyl-L-methionine = N(6)-dimethyladenosine(1518)/N(6)-dimethyladenosine(1519) in 16S rRNA + 4 S-adenosyl-L-homocysteine + 4 H(+). Specifically dimethylates two adjacent adenosines (A1518 and A1519) in the loop of a conserved hairpin near the 3'-end of 16S rRNA in the 30S particle. May play a critical role in biogenesis of 30S subunits. The chain is Ribosomal RNA small subunit methyltransferase A from Helicobacter pylori (strain Shi470).